Reading from the N-terminus, the 161-residue chain is MPDELRAEKSFPSKPYDSLKNKSEFDKVYQKGFKKHNPFFSLFVLDLSKEPPKEKEGFKDPLSCRLKDKKALYLLGLSVSKKVGNAVKRNLIKRRLRSLTLKHAALCQGLALVFVPRSDCYHLDFWALEKHFLEMLTSIKNYMNKALKGLKKGMTHTYAKQ.

The disordered stretch occupies residues methionine 1–lysine 20.

It belongs to the RnpA family. As to quaternary structure, consists of a catalytic RNA component (M1 or rnpB) and a protein subunit.

The enzyme catalyses Endonucleolytic cleavage of RNA, removing 5'-extranucleotides from tRNA precursor.. Functionally, RNaseP catalyzes the removal of the 5'-leader sequence from pre-tRNA to produce the mature 5'-terminus. It can also cleave other RNA substrates such as 4.5S RNA. The protein component plays an auxiliary but essential role in vivo by binding to the 5'-leader sequence and broadening the substrate specificity of the ribozyme. In Helicobacter pylori (strain P12), this protein is Ribonuclease P protein component.